The sequence spans 284 residues: Ermin (284 aa).

Residues 1-61 form a disordered region; that stretch reads MTDVPATFTQ…APTKGSQEER (61 aa). Ser-73 carries the post-translational modification Phosphoserine. The tract at residues 108-251 is disordered; that stretch reads TFREGRQWEK…PTLGKKSDIS (144 aa). Basic and acidic residues-rich tracts occupy residues 126-140 and 171-183; these read EIRRQKERITEQPLK and LHSKHDEEQKVWD. Acidic residues predominate over residues 184–200; it reads EEIDDDDDDNCNDDEDE. The span at 201 to 220 shows a compositional bias: basic and acidic residues; it reads VRVIEFKKKHEEVSQFKEEG. A phosphoserine mark is found at Ser-214, Ser-226, Ser-230, and Ser-233. Over residues 225–235 the composition is skewed to low complexity; sequence DSPLSSASSQA. Residue Thr-237 is modified to Phosphothreonine. Positions 265 to 284 are binds actin; the sequence is KIRKGNTKQRIDEFESMMHL.

In terms of assembly, binds actin.

The protein localises to the cytoplasm. Its subcellular location is the cytoskeleton. Functionally, plays a role in cytoskeletal rearrangements during the late wrapping and/or compaction phases of myelinogenesis as well as in maintenance and stability of myelin sheath in the adult. May play an important role in late-stage oligodendroglia maturation, myelin/Ranvier node formation during CNS development, and in the maintenance and plasticity of related structures in the mature CNS. This Pongo abelii (Sumatran orangutan) protein is Ermin (ERMN).